The sequence spans 182 residues: ATP synthase subunit delta (182 aa).

It belongs to the ATPase delta chain family. In terms of assembly, F-type ATPases have 2 components, F(1) - the catalytic core - and F(0) - the membrane proton channel. F(1) has five subunits: alpha(3), beta(3), gamma(1), delta(1), epsilon(1). F(0) has three main subunits: a(1), b(2) and c(10-14). The alpha and beta chains form an alternating ring which encloses part of the gamma chain. F(1) is attached to F(0) by a central stalk formed by the gamma and epsilon chains, while a peripheral stalk is formed by the delta and b chains.

Its subcellular location is the cell membrane. Functionally, f(1)F(0) ATP synthase produces ATP from ADP in the presence of a proton or sodium gradient. F-type ATPases consist of two structural domains, F(1) containing the extramembraneous catalytic core and F(0) containing the membrane proton channel, linked together by a central stalk and a peripheral stalk. During catalysis, ATP synthesis in the catalytic domain of F(1) is coupled via a rotary mechanism of the central stalk subunits to proton translocation. In terms of biological role, this protein is part of the stalk that links CF(0) to CF(1). It either transmits conformational changes from CF(0) to CF(1) or is implicated in proton conduction. This is ATP synthase subunit delta from Lachnoclostridium phytofermentans (strain ATCC 700394 / DSM 18823 / ISDg) (Clostridium phytofermentans).